The following is a 488-amino-acid chain: Aspartyl/glutamyl-tRNA(Asn/Gln) amidotransferase subunit B (488 aa).

It belongs to the GatB/GatE family. GatB subfamily. As to quaternary structure, heterotrimer of A, B and C subunits.

The catalysed reaction is L-glutamyl-tRNA(Gln) + L-glutamine + ATP + H2O = L-glutaminyl-tRNA(Gln) + L-glutamate + ADP + phosphate + H(+). The enzyme catalyses L-aspartyl-tRNA(Asn) + L-glutamine + ATP + H2O = L-asparaginyl-tRNA(Asn) + L-glutamate + ADP + phosphate + 2 H(+). Allows the formation of correctly charged Asn-tRNA(Asn) or Gln-tRNA(Gln) through the transamidation of misacylated Asp-tRNA(Asn) or Glu-tRNA(Gln) in organisms which lack either or both of asparaginyl-tRNA or glutaminyl-tRNA synthetases. The reaction takes place in the presence of glutamine and ATP through an activated phospho-Asp-tRNA(Asn) or phospho-Glu-tRNA(Gln). The chain is Aspartyl/glutamyl-tRNA(Asn/Gln) amidotransferase subunit B from Chlamydia trachomatis serovar A (strain ATCC VR-571B / DSM 19440 / HAR-13).